Consider the following 205-residue polypeptide: MVNILHIDSSPRAERSHSRELSKEFVSAWRAAHPEDAIAYRDLGHHPVPHVNEAWIAAAFSPPETHTPELAEAIRVSDELVDEFLAADRYVFGVPMYNFNIPSTFKAYIDQIVRINRTVSLDAQGFRGLVEGKKAVIITARGGDFSATSPAVAYDFQEPYLRTIFGFIGITDIQFINANSLNEGDARTQSLAEARAAIQDAIAQW.

FMN is bound by residues Ser-10, 16–18, and 96–99; these read SHS and MYNF.

The protein belongs to the azoreductase type 1 family. In terms of assembly, homodimer. It depends on FMN as a cofactor.

The catalysed reaction is 2 a quinone + NADH + H(+) = 2 a 1,4-benzosemiquinone + NAD(+). It catalyses the reaction N,N-dimethyl-1,4-phenylenediamine + anthranilate + 2 NAD(+) = 2-(4-dimethylaminophenyl)diazenylbenzoate + 2 NADH + 2 H(+). Quinone reductase that provides resistance to thiol-specific stress caused by electrophilic quinones. In terms of biological role, also exhibits azoreductase activity. Catalyzes the reductive cleavage of the azo bond in aromatic azo compounds to the corresponding amines. The protein is FMN-dependent NADH:quinone oxidoreductase of Nostoc punctiforme (strain ATCC 29133 / PCC 73102).